The primary structure comprises 190 residues: Nuclear transcription factor Y subunit A-7 (190 aa).

Residues 1–33 are disordered; the sequence is MTSSIHELSDNIGSHEKQEQRDSHFQPPIPSAR. Basic and acidic residues predominate over residues 7 to 24; the sequence is ELSDNIGSHEKQEQRDSH. The short motif at 103–126 is the Subunit association domain (SAD) element; the sequence is FVNAKQYHGILRRRQSRARLESQN. The segment at residues 133 to 158 is a DNA-binding region (NFYA/HAP2-type); sequence KPYLHESRHLHAIRRPRGCGGRFLNA. The segment at 147 to 190 is disordered; sequence RPRGCGGRFLNAKKEDEHHEDSSHEEKSNLSAGKSAMAASSGTS. The segment covering 158–174 has biased composition (basic and acidic residues); it reads AKKEDEHHEDSSHEEKS. Over residues 177–190 the composition is skewed to low complexity; that stretch reads SAGKSAMAASSGTS.

This sequence belongs to the NFYA/HAP2 subunit family. Heterotrimeric transcription factor composed of three components, NF-YA, NF-YB and NF-YC. NF-YB and NF-YC must interact and dimerize for NF-YA association and DNA binding.

The protein localises to the nucleus. Functionally, stimulates the transcription of various genes by recognizing and binding to a CCAAT motif in promoters. The protein is Nuclear transcription factor Y subunit A-7 (NFYA7) of Arabidopsis thaliana (Mouse-ear cress).